Here is a 232-residue protein sequence, read N- to C-terminus: MAKELIGNDWDQILNPIFTSDKYHELHNFLKKEYSTRQIYPDMYHIFTAFKLTPFNKTKVVILGQDPYHNPGQANGMSFSVMPGAQLPPSLRNIYKELYDDVGAIPVNHGYLKKWADQGVLLLNAVLTVPYGHANGHQGKGWEDVTDAAIKALSKRGKVVFILWGRFAQNKIPLIDQSKNFIIKSSHPSPFSADRGFFGSRPFSRCNTALINFGETPIDWQLPEKVSKSDLI.

Asp-66 functions as the Proton acceptor in the catalytic mechanism.

The protein belongs to the uracil-DNA glycosylase (UDG) superfamily. UNG family.

It localises to the cytoplasm. The enzyme catalyses Hydrolyzes single-stranded DNA or mismatched double-stranded DNA and polynucleotides, releasing free uracil.. Functionally, excises uracil residues from the DNA which can arise as a result of misincorporation of dUMP residues by DNA polymerase or due to deamination of cytosine. The sequence is that of Uracil-DNA glycosylase from Lactobacillus acidophilus (strain ATCC 700396 / NCK56 / N2 / NCFM).